Reading from the N-terminus, the 337-residue chain is 15-cis-phytoene synthase (337 aa).

This sequence belongs to the phytoene/squalene synthase family. ATP is required as a cofactor. Mn(2+) serves as cofactor. It depends on Mg(2+) as a cofactor.

The catalysed reaction is 2 (2E,6E,10E)-geranylgeranyl diphosphate = 15-cis-phytoene + 2 diphosphate. It functions in the pathway carotenoid biosynthesis; phytoene biosynthesis. Involved in the biosynthesis of carotenoids. Catalyzes the condensation of two molecules of geranylgeranyl diphosphate (GGPP) to give prephytoene diphosphate (PPPP) and the subsequent rearrangement of the cyclopropylcarbinyl intermediate to yield 15-cis-phytoene. This Synechocystis sp. (strain ATCC 27184 / PCC 6803 / Kazusa) protein is 15-cis-phytoene synthase (crtB).